Consider the following 238-residue polypeptide: 1-(5-phosphoribosyl)-5-[(5-phosphoribosylamino)methylideneamino] imidazole-4-carboxamide isomerase (238 aa).

The Proton acceptor role is filled by Asp-7. The Proton donor role is filled by Asp-129.

It belongs to the HisA/HisF family.

Its subcellular location is the cytoplasm. It carries out the reaction 1-(5-phospho-beta-D-ribosyl)-5-[(5-phospho-beta-D-ribosylamino)methylideneamino]imidazole-4-carboxamide = 5-[(5-phospho-1-deoxy-D-ribulos-1-ylimino)methylamino]-1-(5-phospho-beta-D-ribosyl)imidazole-4-carboxamide. The protein operates within amino-acid biosynthesis; L-histidine biosynthesis; L-histidine from 5-phospho-alpha-D-ribose 1-diphosphate: step 4/9. This Leuconostoc mesenteroides subsp. mesenteroides (strain ATCC 8293 / DSM 20343 / BCRC 11652 / CCM 1803 / JCM 6124 / NCDO 523 / NBRC 100496 / NCIMB 8023 / NCTC 12954 / NRRL B-1118 / 37Y) protein is 1-(5-phosphoribosyl)-5-[(5-phosphoribosylamino)methylideneamino] imidazole-4-carboxamide isomerase.